The chain runs to 158 residues: Glutathione peroxidase homolog BsaA (158 aa).

Threonine 36 is a catalytic residue.

The protein belongs to the glutathione peroxidase family.

The sequence is that of Glutathione peroxidase homolog BsaA (bsaA) from Staphylococcus epidermidis (strain ATCC 35984 / DSM 28319 / BCRC 17069 / CCUG 31568 / BM 3577 / RP62A).